The following is a 299-amino-acid chain: 4-diphosphocytidyl-2-C-methyl-D-erythritol kinase (299 aa).

Lys-10 is a catalytic residue. Pro-96–Ala-106 is a binding site for ATP. Asp-138 is a catalytic residue.

This sequence belongs to the GHMP kinase family. IspE subfamily.

The catalysed reaction is 4-CDP-2-C-methyl-D-erythritol + ATP = 4-CDP-2-C-methyl-D-erythritol 2-phosphate + ADP + H(+). The protein operates within isoprenoid biosynthesis; isopentenyl diphosphate biosynthesis via DXP pathway; isopentenyl diphosphate from 1-deoxy-D-xylulose 5-phosphate: step 3/6. Catalyzes the phosphorylation of the position 2 hydroxy group of 4-diphosphocytidyl-2C-methyl-D-erythritol. The sequence is that of 4-diphosphocytidyl-2-C-methyl-D-erythritol kinase from Streptomyces coelicolor (strain ATCC BAA-471 / A3(2) / M145).